The sequence spans 599 residues: Elongation factor 4 (599 aa).

In terms of domain architecture, tr-type G spans 5 to 187 (SHIRNFSIIA…VLIKSVPAPV (183 aa)). Residues 17–22 (DHGKST) and 134–137 (NKID) contribute to the GTP site.

Belongs to the TRAFAC class translation factor GTPase superfamily. Classic translation factor GTPase family. LepA subfamily.

Its subcellular location is the cell inner membrane. The enzyme catalyses GTP + H2O = GDP + phosphate + H(+). Functionally, required for accurate and efficient protein synthesis under certain stress conditions. May act as a fidelity factor of the translation reaction, by catalyzing a one-codon backward translocation of tRNAs on improperly translocated ribosomes. Back-translocation proceeds from a post-translocation (POST) complex to a pre-translocation (PRE) complex, thus giving elongation factor G a second chance to translocate the tRNAs correctly. Binds to ribosomes in a GTP-dependent manner. The protein is Elongation factor 4 of Saccharophagus degradans (strain 2-40 / ATCC 43961 / DSM 17024).